Here is a 321-residue protein sequence, read N- to C-terminus: Citrate synthase (321 aa).

Catalysis depends on residues His248 and Asp306.

Belongs to the citrate synthase family.

It catalyses the reaction oxaloacetate + acetyl-CoA + H2O = citrate + CoA + H(+). Its pathway is carbohydrate metabolism; tricarboxylic acid cycle; isocitrate from oxaloacetate: step 1/2. In Bartonella bacilliformis, this protein is Citrate synthase (gltA).